A 217-amino-acid polypeptide reads, in one-letter code: Small ribosomal subunit protein uS3 (217 aa).

The region spanning Ile38 to Lys106 is the KH type-2 domain.

It belongs to the universal ribosomal protein uS3 family. Part of the 30S ribosomal subunit. Forms a tight complex with proteins S10 and S14.

In terms of biological role, binds the lower part of the 30S subunit head. Binds mRNA in the 70S ribosome, positioning it for translation. This Streptococcus thermophilus (strain CNRZ 1066) protein is Small ribosomal subunit protein uS3.